A 212-amino-acid polypeptide reads, in one-letter code: 3-demethoxyubiquinol 3-hydroxylase (212 aa).

6 residues coordinate Fe cation: Glu61, Glu91, His94, Glu143, Glu175, and His178.

Belongs to the COQ7 family. Requires Fe cation as cofactor.

The protein resides in the cell membrane. It catalyses the reaction a 5-methoxy-2-methyl-3-(all-trans-polyprenyl)benzene-1,4-diol + AH2 + O2 = a 3-demethylubiquinol + A + H2O. The protein operates within cofactor biosynthesis; ubiquinone biosynthesis. Its function is as follows. Catalyzes the hydroxylation of 2-nonaprenyl-3-methyl-6-methoxy-1,4-benzoquinol during ubiquinone biosynthesis. This is 3-demethoxyubiquinol 3-hydroxylase from Methylibium petroleiphilum (strain ATCC BAA-1232 / LMG 22953 / PM1).